We begin with the raw amino-acid sequence, 65 residues long: Small ribosomal subunit protein bS21 (65 aa).

The span at 33-42 (RRREHYEKPS) shows a compositional bias: basic and acidic residues. The interval 33-65 (RRREHYEKPSVKRKRKEAARLRKLQKMAREANN) is disordered. The segment covering 43 to 58 (VKRKRKEAARLRKLQK) has biased composition (basic residues).

Belongs to the bacterial ribosomal protein bS21 family.

In Herpetosiphon aurantiacus (strain ATCC 23779 / DSM 785 / 114-95), this protein is Small ribosomal subunit protein bS21.